The chain runs to 899 residues: Bifunctional uridylyltransferase/uridylyl-removing enzyme (899 aa).

The uridylyltransferase stretch occupies residues 1–342 (MPQMDPELFD…RAGESGPATP (342 aa)). Positions 343 to 705 (LNSRFQVRDG…TTQREFEGGT (363 aa)) are uridylyl-removing. Residues 461-583 (VDAHTLNLIK…VGDQTHLDYL (123 aa)) enclose the HD domain. 2 consecutive ACT domains span residues 706 to 784 (QIFI…DEYP) and 816 to 897 (ILEL…SLQI).

It belongs to the GlnD family. It depends on Mg(2+) as a cofactor.

The enzyme catalyses [protein-PII]-L-tyrosine + UTP = [protein-PII]-uridylyl-L-tyrosine + diphosphate. The catalysed reaction is [protein-PII]-uridylyl-L-tyrosine + H2O = [protein-PII]-L-tyrosine + UMP + H(+). With respect to regulation, uridylyltransferase (UTase) activity is inhibited by glutamine, while glutamine activates uridylyl-removing (UR) activity. In terms of biological role, modifies, by uridylylation and deuridylylation, the PII regulatory proteins (GlnB and homologs), in response to the nitrogen status of the cell that GlnD senses through the glutamine level. Under low glutamine levels, catalyzes the conversion of the PII proteins and UTP to PII-UMP and PPi, while under higher glutamine levels, GlnD hydrolyzes PII-UMP to PII and UMP (deuridylylation). Thus, controls uridylylation state and activity of the PII proteins, and plays an important role in the regulation of nitrogen assimilation and metabolism. This chain is Bifunctional uridylyltransferase/uridylyl-removing enzyme, found in Ectopseudomonas mendocina (strain ymp) (Pseudomonas mendocina).